A 619-amino-acid chain; its full sequence is Sodium-dependent dopamine transporter (619 aa).

The Cytoplasmic segment spans residues 1–56 (MSKSKCSVGPMSSVVAPAKESNAVGPREVELILVKEQNGVQLTNSTLINPPQTPVE). The chain crosses the membrane as a discontinuously helical span at residues 57 to 95 (AQERETWSKKIDFLLSVIGFAVDLANVWRFPYLCYKNGG). The Na(+) site is built by G75, A77, V78, D79, and N82. D79 contacts dopamine. The next 2 helical transmembrane spans lie at 96 to 127 (GAFL…NREG) and 128 to 171 (AAGV…FSSF). Residues S149 and G153 each contribute to the dopamine site. Topologically, residues 172–235 (TMDLPWIHCN…SRGIDDLGPP (64 aa)) are extracellular. Residues C180 and C189 are joined by a disulfide bond. Residues N181, N188, N196, and N204 are each glycosylated (N-linked (GlcNAc...) asparagine). 2 helical membrane-spanning segments follow: residues 236 to 255 (RWQL…FSLW) and 256 to 286 (KGVK…GVTL). Topologically, residues 287 to 305 (PGAMDGIRAYLSVDFYRLC) are extracellular. A discontinuously helical transmembrane segment spans residues 306–334 (EASVWIDAATQVCFSLGVGFGVLIAFSSY). A chloride-binding site is contributed by Q316. F319 is a binding site for dopamine. The Na(+) site is built by S320 and N352. Chloride is bound at residue S320. The helical transmembrane segment at 335–375 (NKFTNNCYRDAIITTSINSLTSFSSGFVVFSFLGYMAQKHN) threads the bilayer. A chloride-binding site is contributed by S356. Topologically, residues 376–399 (VPIRDVATDGPGLIFIIYPEAIAT) are extracellular. The next 3 helical transmembrane spans lie at 400-441 (LPLS…QLLH), 442-465 (RHRE…CVTN), and 466-498 (GGIY…AWFY). Residues L417, D420, and S421 each coordinate Na(+). The dopamine site is built by S421 and A422. The Cytoplasmic segment spans residues 499–515 (GVQQFSDDIKQMTGQRP). A helical transmembrane segment spans residues 516-541 (NLYWRLCWKLVSPCFLLYVVVVSIVT). Residues 542-552 (FRPPHYGAYIF) lie on the Extracellular side of the membrane. Residues 553–582 (PDWANALGWIIATSSMAMVPIYATYKFCSL) form a helical membrane-spanning segment. Residues 560-589 (GWIIATSSMAMVPIYATYKFCSLPGSFREK) form an interaction with TGFB1I1 region. Topologically, residues 583-619 (PGSFREKLAYAITPEKDHQLVDRGEVRQFTLRHWLLL) are cytoplasmic.

This sequence belongs to the sodium:neurotransmitter symporter (SNF) (TC 2.A.22) family. SLC6A3 subfamily. Monomer. Homooligomer; disulfide-linked. Interacts with PRKCABP and TGFB1I1. Interacts (via N-terminus) with SYNGR3 (via N-terminus). Interacts with SLC18A2. Interacts with TOR1A (ATP-bound); TOR1A regulates SLC6A3 subcellular location. Interacts with alpha-synuclein/SNCA. Interacts with SEPTIN4. In terms of tissue distribution, brain. Expressed in the substantia nigra and ventral tegmental area, regions that contain dopaminergic cell bodies.

Its subcellular location is the cell membrane. The protein resides in the cell projection. The protein localises to the neuron projection. It is found in the axon. It carries out the reaction dopamine(out) + chloride(out) + Na(+)(out) = dopamine(in) + chloride(in) + Na(+)(in). It catalyses the reaction (R)-noradrenaline(out) + chloride(out) + Na(+)(out) = (R)-noradrenaline(in) + chloride(in) + Na(+)(in). The enzyme catalyses dopamine(out) + chloride(out) + 2 Na(+)(out) = dopamine(in) + chloride(in) + 2 Na(+)(in). Its activity is regulated as follows. Inhibited by mazindol, cocaine, desipramine, GBR 12783 dihydrochloride, GBR 12909 dihydrochloride and nomifensine. Inhibited by zinc ions. In terms of biological role, mediates sodium- and chloride-dependent transport of dopamine. Also mediates sodium- and chloride-dependent transport of norepinephrine (also known as noradrenaline). Regulator of light-dependent retinal hyaloid vessel regression, downstream of OPN5 signaling. The protein is Sodium-dependent dopamine transporter (Slc6a3) of Rattus norvegicus (Rat).